The sequence spans 160 residues: Major strawberry allergen Fra a 1-A (160 aa).

This sequence belongs to the BetVI family. In terms of assembly, monomer.

In terms of biological role, may be involved in ripening of fruits. The chain is Major strawberry allergen Fra a 1-A from Fragaria ananassa (Strawberry).